A 287-amino-acid polypeptide reads, in one-letter code: Elongation factor Ts (287 aa).

The involved in Mg(2+) ion dislocation from EF-Tu stretch occupies residues 80-83; the sequence is TDFL.

It belongs to the EF-Ts family.

It localises to the cytoplasm. Functionally, associates with the EF-Tu.GDP complex and induces the exchange of GDP to GTP. It remains bound to the aminoacyl-tRNA.EF-Tu.GTP complex up to the GTP hydrolysis stage on the ribosome. This is Elongation factor Ts from Ectopseudomonas mendocina (strain ymp) (Pseudomonas mendocina).